We begin with the raw amino-acid sequence, 368 residues long: Serine/threonine-protein phosphatase PP2A-like PPG1 (368 aa).

4 residues coordinate Mn(2+): Asp-50, His-52, Asp-78, and Asn-110. His-111 acts as the Proton donor in catalysis. Residues His-161 and His-247 each contribute to the Mn(2+) site.

The protein belongs to the PPP phosphatase family. PP-2A subfamily. Inactivated in a complex with phosphatase methylesterase PPE1 (PP2Ai). Interacts with phosphatase 2A activator RRD1, which can reactivate PP2Ai by dissociating the catalytic subunit from the complex. Interacts with TAP42. Mn(2+) serves as cofactor. In terms of processing, reversibly methyl esterified on Leu-368 by leucine carboxyl methyltransferase 1 (PPM1) and protein phosphatase methylesterase 1 (PPE1). Carboxyl methylation influences the affinity of the catalytic subunit for the different regulatory subunits, thereby modulating the PP2A holoenzyme's substrate specificity, enzyme activity and cellular localization.

The enzyme catalyses O-phospho-L-seryl-[protein] + H2O = L-seryl-[protein] + phosphate. It catalyses the reaction O-phospho-L-threonyl-[protein] + H2O = L-threonyl-[protein] + phosphate. Functionally, involved in glycogen accumulation. The protein is Serine/threonine-protein phosphatase PP2A-like PPG1 (PPG1) of Saccharomyces cerevisiae (strain ATCC 204508 / S288c) (Baker's yeast).